The following is a 358-amino-acid chain: Protein-glutamate methylesterase/protein-glutamine glutaminase 1 (358 aa).

The Response regulatory domain occupies 7–124 (SVLLVDDSAV…KNFLIDSAAE (118 aa)). Residue Asp58 is modified to 4-aspartylphosphate. A CheB-type methylesterase domain is found at 170–358 (AQTTERIVAI…QEIHQAILHR (189 aa)). Residues Ser182, His208, and Asp304 contribute to the active site.

Belongs to the CheB family. Phosphorylated by CheA. Phosphorylation of the N-terminal regulatory domain activates the methylesterase activity.

The protein localises to the cytoplasm. It catalyses the reaction [protein]-L-glutamate 5-O-methyl ester + H2O = L-glutamyl-[protein] + methanol + H(+). It carries out the reaction L-glutaminyl-[protein] + H2O = L-glutamyl-[protein] + NH4(+). Involved in chemotaxis. Part of a chemotaxis signal transduction system that modulates chemotaxis in response to various stimuli. Catalyzes the demethylation of specific methylglutamate residues introduced into the chemoreceptors (methyl-accepting chemotaxis proteins or MCP) by CheR. Also mediates the irreversible deamidation of specific glutamine residues to glutamic acid. This chain is Protein-glutamate methylesterase/protein-glutamine glutaminase 1, found in Pseudomonas savastanoi pv. phaseolicola (strain 1448A / Race 6) (Pseudomonas syringae pv. phaseolicola (strain 1448A / Race 6)).